The following is a 119-amino-acid chain: Small ribosomal subunit protein uS13 (119 aa).

A disordered region spans residues arginine 92–arginine 119.

The protein belongs to the universal ribosomal protein uS13 family. As to quaternary structure, part of the 30S ribosomal subunit. Forms a loose heterodimer with protein S19. Forms two bridges to the 50S subunit in the 70S ribosome.

In terms of biological role, located at the top of the head of the 30S subunit, it contacts several helices of the 16S rRNA. In the 70S ribosome it contacts the 23S rRNA (bridge B1a) and protein L5 of the 50S subunit (bridge B1b), connecting the 2 subunits; these bridges are implicated in subunit movement. Contacts the tRNAs in the A and P-sites. This chain is Small ribosomal subunit protein uS13, found in Halorhodospira halophila (strain DSM 244 / SL1) (Ectothiorhodospira halophila (strain DSM 244 / SL1)).